Consider the following 64-residue polypeptide: Large ribosomal subunit protein bL35 (64 aa).

It belongs to the bacterial ribosomal protein bL35 family.

In Helicobacter hepaticus (strain ATCC 51449 / 3B1), this protein is Large ribosomal subunit protein bL35.